We begin with the raw amino-acid sequence, 427 residues long: Glutamate-1-semialdehyde 2,1-aminomutase (427 aa).

Lysine 265 is subject to N6-(pyridoxal phosphate)lysine.

The protein belongs to the class-III pyridoxal-phosphate-dependent aminotransferase family. HemL subfamily. As to quaternary structure, homodimer. The cofactor is pyridoxal 5'-phosphate.

The protein resides in the cytoplasm. The catalysed reaction is (S)-4-amino-5-oxopentanoate = 5-aminolevulinate. It functions in the pathway porphyrin-containing compound metabolism; protoporphyrin-IX biosynthesis; 5-aminolevulinate from L-glutamyl-tRNA(Glu): step 2/2. The chain is Glutamate-1-semialdehyde 2,1-aminomutase from Pseudomonas savastanoi pv. phaseolicola (strain 1448A / Race 6) (Pseudomonas syringae pv. phaseolicola (strain 1448A / Race 6)).